We begin with the raw amino-acid sequence, 145 residues long: Peptide methionine sulfoxide reductase MsrB (145 aa).

The region spanning 4 to 127 is the MsrB domain; that stretch reads SDELKQRIGD…NSAALKFIPY (124 aa). Cys-116 functions as the Nucleophile in the catalytic mechanism.

It belongs to the MsrB Met sulfoxide reductase family.

The enzyme catalyses L-methionyl-[protein] + [thioredoxin]-disulfide + H2O = L-methionyl-(R)-S-oxide-[protein] + [thioredoxin]-dithiol. The sequence is that of Peptide methionine sulfoxide reductase MsrB from Streptococcus pyogenes serotype M1.